We begin with the raw amino-acid sequence, 341 residues long: Phosphoribosylformylglycinamidine cyclo-ligase (341 aa).

It belongs to the AIR synthase family.

Its subcellular location is the cytoplasm. It catalyses the reaction 2-formamido-N(1)-(5-O-phospho-beta-D-ribosyl)acetamidine + ATP = 5-amino-1-(5-phospho-beta-D-ribosyl)imidazole + ADP + phosphate + H(+). It functions in the pathway purine metabolism; IMP biosynthesis via de novo pathway; 5-amino-1-(5-phospho-D-ribosyl)imidazole from N(2)-formyl-N(1)-(5-phospho-D-ribosyl)glycinamide: step 2/2. The polypeptide is Phosphoribosylformylglycinamidine cyclo-ligase (Picosynechococcus sp. (strain ATCC 27264 / PCC 7002 / PR-6) (Agmenellum quadruplicatum)).